Here is a 222-residue protein sequence, read N- to C-terminus: Probable septum site-determining protein MinC (222 aa).

This sequence belongs to the MinC family. As to quaternary structure, interacts with MinD and FtsZ.

Cell division inhibitor that blocks the formation of polar Z ring septums. Rapidly oscillates between the poles of the cell to destabilize FtsZ filaments that have formed before they mature into polar Z rings. Prevents FtsZ polymerization. This Lysinibacillus sphaericus (strain C3-41) protein is Probable septum site-determining protein MinC.